A 199-amino-acid chain; its full sequence is Recombination protein RecR (199 aa).

Residues 59–74 (CLNCGNVGTSDICALC) form a C4-type zinc finger. In terms of domain architecture, Toprim spans 82 to 176 (GELCVVEDVA…KLTSLAQGVP (95 aa)).

Belongs to the RecR family.

May play a role in DNA repair. It seems to be involved in an RecBC-independent recombinational process of DNA repair. It may act with RecF and RecO. This is Recombination protein RecR from Ruegeria sp. (strain TM1040) (Silicibacter sp.).